Here is a 452-residue protein sequence, read N- to C-terminus: Keratin, type I cytoskeletal 15 (452 aa).

Residues 1–97 (MATTFLQTSS…GGDGGLLSGN (97 aa)) are head. Phosphoserine occurs at positions 15, 16, 28, 33, and 47. Residues 98 to 133 (EKVTMQNLNDRLASYLDKVRALEQANTELEVKIRDW) form a coil 1A region. In terms of domain architecture, IF rod spans 98–410 (EKVTMQNLND…NLLEGQDAKM (313 aa)). Thr124 is modified (phosphothreonine). The interval 134–152 (YQKQSPASPDRDYSHYFKT) is linker 1. Positions 153–244 (MEEIRDKILA…KNHEEEMKEF (92 aa)) are coil 1B. The tract at residues 245–264 (SSQLAGQVNVEMDAAPGVDL) is linker 12. Residues 265–406 (TRMLAEMREQ…ATYRNLLEGQ (142 aa)) are coil 2. Residue Lys293 forms a Glycyl lysine isopeptide (Lys-Gly) (interchain with G-Cter in SUMO2) linkage. Thr294 and Thr316 each carry phosphothreonine. Residues 407–452 (DAKMAGIGVREGSSGGGGSSSSSSNFHISVEESVDGKVVSSRKREI) form a tail region. The segment at 413–452 (IGVREGSSGGGGSSSSSSNFHISVEESVDGKVVSSRKREI) is disordered. Lys443 participates in a covalent cross-link: Glycyl lysine isopeptide (Lys-Gly) (interchain with G-Cter in SUMO1); alternate. A Glycyl lysine isopeptide (Lys-Gly) (interchain with G-Cter in SUMO2); alternate cross-link involves residue Lys443.

The protein belongs to the intermediate filament family. Heterotetramer of two type I and two type II keratins. Forms a heterodimer with KRT14. Interacts with PLEC isoform 1C, when in a heterodimer with KRT14. Interacts with NOD2. As to expression, expressed strongly in the basal cell layer at the tips of rete-like prominences (RLPs) of adult dorsal tongue, outer root sheath (ORS) of hair follicle and skin epidermis (at protein level).

In terms of biological role, in the absence of KRT14, makes a bona fide, but ultrastructurally distinct keratin filament network with KRT5. The protein is Keratin, type I cytoskeletal 15 (Krt15) of Mus musculus (Mouse).